We begin with the raw amino-acid sequence, 361 residues long: MTQVYNFSAGPAMLPVEVLRRAEQELRNWHGLGTSVMEISHRSKEFMQVAEESEKDLRDLLQIPANYKVLFCHGGARAQFAAVPLNLLGDRNSADYIDGGYWAHSAIKEAQKYCTPNVIDVTTHDNGLTGIQPMKQWKLSDNAAYVHYCPNETIDGVAINEQPDFGNKVVVADYSSSILSRPIDISRYGVIYAGAQKNIGPAGLTLVIVREDLLGKAHTALPSILDYKVLADNDSMFNTPPTFAWYLSGLVFKWLKEQGGLGEMEKRNQAKAELLYGAIDRTGFYRNQVAITNRSWMNVPFQMADASLDKLFLSEAEAQGLQALKGHRVAGGMRASIYNAMPIEGVKALTDFMADFERRHG.

Residue Arg-42 coordinates L-glutamate. Pyridoxal 5'-phosphate is bound by residues 76 to 77, Trp-102, Thr-153, Asp-173, and Gln-196; that span reads AR. An N6-(pyridoxal phosphate)lysine modification is found at Lys-197. Residue 238 to 239 coordinates pyridoxal 5'-phosphate; it reads NT.

This sequence belongs to the class-V pyridoxal-phosphate-dependent aminotransferase family. SerC subfamily. Homodimer. It depends on pyridoxal 5'-phosphate as a cofactor.

The protein resides in the cytoplasm. It carries out the reaction O-phospho-L-serine + 2-oxoglutarate = 3-phosphooxypyruvate + L-glutamate. The catalysed reaction is 4-(phosphooxy)-L-threonine + 2-oxoglutarate = (R)-3-hydroxy-2-oxo-4-phosphooxybutanoate + L-glutamate. It participates in amino-acid biosynthesis; L-serine biosynthesis; L-serine from 3-phospho-D-glycerate: step 2/3. Its pathway is cofactor biosynthesis; pyridoxine 5'-phosphate biosynthesis; pyridoxine 5'-phosphate from D-erythrose 4-phosphate: step 3/5. Catalyzes the reversible conversion of 3-phosphohydroxypyruvate to phosphoserine and of 3-hydroxy-2-oxo-4-phosphonooxybutanoate to phosphohydroxythreonine. This is Phosphoserine aminotransferase from Yersinia pestis bv. Antiqua (strain Angola).